A 234-amino-acid chain; its full sequence is Small ribosomal subunit protein eS4 (234 aa).

The S4 RNA-binding domain maps to 39–102 (MPLVVVLRDL…NANYRVVIGM (64 aa)).

The protein belongs to the eukaryotic ribosomal protein eS4 family.

In Methanocella arvoryzae (strain DSM 22066 / NBRC 105507 / MRE50), this protein is Small ribosomal subunit protein eS4.